We begin with the raw amino-acid sequence, 961 residues long: Cytochrome b5-like reductase apf12 (961 aa).

A298 lines the FAD pocket. The region spanning 429 to 548 is the FAD-binding FR-type domain; it reads ARPQVDAFAW…IKPAPHFRIA (120 aa). NADP(+)-binding positions include 453–456, 499–500, and G753; these read SRIQ and SK. A Cytochrome b5 heme-binding domain is found at 716–793; it reads LNQITKLELA…LNEMVIGRLD (78 aa). Residue 753–755 coordinates FAD; it reads GGE.

This sequence belongs to the flavoprotein pyridine nucleotide cytochrome reductase family. The cofactor is FAD.

It functions in the pathway secondary metabolite biosynthesis. Cytochrome b5-like reductase; part of the gene cluster that mediates the biosynthesis of the cyclic tetrapeptide apicidin F (APF). The non-ribosomal peptide synthetase apf1 incorporates four different amino acids to produce apicidin F: L-phenylalanine, D-pipecolic acid (D-pip), N-methoxy-L-tryptophan and L-2-aminooctanedioic acid. L-Phenylalanine is the only proteinogenic amino acid directly used by apf1. The 3 other apf1 substrates are non-proteinogenic and have to be modified by other enzymes of the cluster. Lysine is converted to delta-1-pyrroline-5-carboxylate (P5C) which is reduced to L-pipecolic acid (L-pip) by apf3. L-pip is epimerized to D-pip, probably by apf1 activity, prior to incorporation. L-Tryptophan is N-oxidyzed by one of the cytochrome P450 monooxygenases (apf7 or apf8), and further methylated at the hydroxy group by the O-methyltransferase apf6 to yield N-methoxy-L-tryptophan. The synthesis of the fourth apf1 substrate is more complex. The fatty acid synthase apf5 is involved in the synthesis of the octanoic acid backbone of L-2-aminooctanedioic acid by fixing one acetyl-CoA unit and three malonyl-CoA units. Then one of the cytochrome P450 monooxygenases (apf7 or apf8) may oxidize this backbone to 2-oxooctanoic acid. The aminotransferase apf4 is predicted to catalyze the exchange of the keto group with an amino group. The next step would be the oxidation of 2-aminooctanoic acid by one of the cytochrome P450 monooxygenases (apf7 or apf8). The last step is the oxidation of 2-amino-8-hydroxyoctanoic acid to 2-aminooctanedioic acid is catalyzed by the FAD-dependent monooxygenase apf9. This chain is Cytochrome b5-like reductase apf12, found in Gibberella fujikuroi (strain CBS 195.34 / IMI 58289 / NRRL A-6831) (Bakanae and foot rot disease fungus).